Consider the following 90-residue polypeptide: Neuropeptide-like 3 (90 aa).

A signal peptide spans 1 to 16 (MFKLCVFVALLSLAAA). 2 consecutive propeptides follow at residues 17–54 (APAP…LAPQ) and 67–79 (AITQ…LLIK). I89 carries the post-translational modification Isoleucine amide.

It is found in the secreted. The chain is Neuropeptide-like 3 (Nplp3) from Drosophila melanogaster (Fruit fly).